The following is a 261-amino-acid chain: Thiazole synthase (261 aa).

The Schiff-base intermediate with DXP role is filled by Lys101. 1-deoxy-D-xylulose 5-phosphate-binding positions include Gly162, 188–189 (AG), and 210–211 (NT).

It belongs to the ThiG family. As to quaternary structure, homotetramer. Forms heterodimers with either ThiH or ThiS.

It localises to the cytoplasm. It catalyses the reaction [ThiS sulfur-carrier protein]-C-terminal-Gly-aminoethanethioate + 2-iminoacetate + 1-deoxy-D-xylulose 5-phosphate = [ThiS sulfur-carrier protein]-C-terminal Gly-Gly + 2-[(2R,5Z)-2-carboxy-4-methylthiazol-5(2H)-ylidene]ethyl phosphate + 2 H2O + H(+). It functions in the pathway cofactor biosynthesis; thiamine diphosphate biosynthesis. Catalyzes the rearrangement of 1-deoxy-D-xylulose 5-phosphate (DXP) to produce the thiazole phosphate moiety of thiamine. Sulfur is provided by the thiocarboxylate moiety of the carrier protein ThiS. In vitro, sulfur can be provided by H(2)S. The protein is Thiazole synthase of Azoarcus sp. (strain BH72).